The sequence spans 193 residues: Major structural subunit of bundle-forming pilus (193 aa).

Positions M1–G13 are excised as a propeptide. Position 14 is an N-methylleucine (L14). The chain crosses the membrane as a helical span at residues L14–F35. Residues C129 and C179 are joined by a disulfide bond.

The protein belongs to the N-Me-Phe pilin family. In terms of assembly, 10 to 100 laterally aligned filaments or bundle-forming pili coalesce into rope-like bundles. These form linkages between the bacteria within the enteropathogenic E.coli (EPEC) microcolonies that are attached to epithelial cells.

It localises to the fimbrium. It is found in the membrane. Its function is as follows. Major repeating bundle-forming pilus (BFP) subunit. Is required for EPEC localized adherence. This chain is Major structural subunit of bundle-forming pilus (bfpA), found in Escherichia coli O111:H-.